We begin with the raw amino-acid sequence, 353 residues long: Photosystem II D2 protein (353 aa).

An N-acetylthreonine modification is found at threonine 2. Residue threonine 2 is modified to Phosphothreonine. Residues 41 to 61 traverse the membrane as a helical segment; the sequence is CAYFALGGWFTGTTFVTSWYT. Residue histidine 118 coordinates chlorophyll a. The chain crosses the membrane as a helical span at residues 125-141; the sequence is GFMLRQFELARSVQLRP. Glutamine 130 and asparagine 143 together coordinate pheophytin a. Residues 153 to 166 form a helical membrane-spanning segment; sequence VFVSVFLIYPLGQS. Histidine 198 contacts chlorophyll a. The helical transmembrane segment at 208–228 threads the bilayer; it reads AALLCAIHGATVENTLFEDGD. Residues histidine 215 and phenylalanine 262 each contribute to the a plastoquinone site. Fe cation is bound at residue histidine 215. Histidine 269 lines the Fe cation pocket. Residues 279 to 295 traverse the membrane as a helical segment; it reads GLWMSALGVVGLALNLR.

Belongs to the reaction center PufL/M/PsbA/D family. PSII is composed of 1 copy each of membrane proteins PsbA, PsbB, PsbC, PsbD, PsbE, PsbF, PsbH, PsbI, PsbJ, PsbK, PsbL, PsbM, PsbT, PsbX, PsbY, PsbZ, Psb30/Ycf12, at least 3 peripheral proteins of the oxygen-evolving complex and a large number of cofactors. It forms dimeric complexes. Requires The D1/D2 heterodimer binds P680, chlorophylls that are the primary electron donor of PSII, and subsequent electron acceptors. It shares a non-heme iron and each subunit binds pheophytin, quinone, additional chlorophylls, carotenoids and lipids. There is also a Cl(-1) ion associated with D1 and D2, which is required for oxygen evolution. The PSII complex binds additional chlorophylls, carotenoids and specific lipids. as cofactor.

The protein resides in the plastid. The protein localises to the chloroplast thylakoid membrane. It carries out the reaction 2 a plastoquinone + 4 hnu + 2 H2O = 2 a plastoquinol + O2. In terms of biological role, photosystem II (PSII) is a light-driven water:plastoquinone oxidoreductase that uses light energy to abstract electrons from H(2)O, generating O(2) and a proton gradient subsequently used for ATP formation. It consists of a core antenna complex that captures photons, and an electron transfer chain that converts photonic excitation into a charge separation. The D1/D2 (PsbA/PsbD) reaction center heterodimer binds P680, the primary electron donor of PSII as well as several subsequent electron acceptors. D2 is needed for assembly of a stable PSII complex. The chain is Photosystem II D2 protein from Nuphar advena (Common spatterdock).